Consider the following 513-residue polypeptide: MMEIRPAEISDILKQQIATFDTPVDIAETGTILSVGDGIARVYGLQNVQAGEMVEFPGSGQRGMALNLENDNVGVVIFGDDADMREGDTVSRTGAVVEVPTGKALLGRVVDGLGNPIDGKGPLVGDVVMKRADVKAPGIMPRQSVGEPMQTGIKAIDALVPIGRGQRELIIGDRQTGKTAILIDTIVAQKSVNALGDDKKSLYCIYVAIGQKRSTVAQLVRTLEETGAMEYSIVVAATASDPAPMQYLAPYAACAMGEYFRDNGMHALIVYDDLSKQAVAYRQMSLLLRRPPGREAYPGDVFYLHSRLLERAAKMSDEYGAGSLTALPVIETQAGDVSAYIPTNVISITDGQVFLETDLFYRGIRPAVNVGGSVSRVGSAAQIKAMKQVAGKIKLELAQYREMAAFSQFASDLDPATQKQLARGARLVELLKQPETSPLAVEEQVCVLFAGTRGFIDAVPVDKVSSYERQLLAELHTGGKEILESIRTERQITKDNETRLTDFLTSFGRQFAG.

172–179 serves as a coordination point for ATP; that stretch reads GDRQTGKT.

It belongs to the ATPase alpha/beta chains family. In terms of assembly, F-type ATPases have 2 components, CF(1) - the catalytic core - and CF(0) - the membrane proton channel. CF(1) has five subunits: alpha(3), beta(3), gamma(1), delta(1), epsilon(1). CF(0) has three main subunits: a(1), b(2) and c(9-12). The alpha and beta chains form an alternating ring which encloses part of the gamma chain. CF(1) is attached to CF(0) by a central stalk formed by the gamma and epsilon chains, while a peripheral stalk is formed by the delta and b chains.

It is found in the cell inner membrane. The enzyme catalyses ATP + H2O + 4 H(+)(in) = ADP + phosphate + 5 H(+)(out). Its function is as follows. Produces ATP from ADP in the presence of a proton gradient across the membrane. The alpha chain is a regulatory subunit. In Gluconacetobacter diazotrophicus (strain ATCC 49037 / DSM 5601 / CCUG 37298 / CIP 103539 / LMG 7603 / PAl5), this protein is ATP synthase subunit alpha.